Here is a 114-residue protein sequence, read N- to C-terminus: Large ribosomal subunit protein bL20c (114 aa).

This sequence belongs to the bacterial ribosomal protein bL20 family.

Its subcellular location is the plastid. Functionally, binds directly to 23S ribosomal RNA and is necessary for the in vitro assembly process of the 50S ribosomal subunit. It is not involved in the protein synthesizing functions of that subunit. This Prototheca wickerhamii protein is Large ribosomal subunit protein bL20c.